We begin with the raw amino-acid sequence, 322 residues long: Cysteine protease YopT (322 aa).

Residues Cys139, His258, and Asp274 contribute to the active site.

Belongs to the peptidase C58 family. As to quaternary structure, interacts with human ARHA.

The protein resides in the secreted. Functionally, cysteine protease, which is translocated into infected cells and plays a central role in pathogenesis by cleaving the C-terminus end of the human small GTPase RhoA/ARHA, a regulator of cytoskeleton. Once cleaved, ARHA loses its lipid modification, and is released from the cell membrane, leading to the subsequent disruption of actin cytoskeleton of the host cell. This chain is Cysteine protease YopT (yopT), found in Yersinia pseudotuberculosis serotype I (strain IP32953).